A 597-amino-acid polypeptide reads, in one-letter code: Elongation factor 4 (597 aa).

The 183-residue stretch at 2–184 (KNIRNFSIIA…EIVHKIPAPE (183 aa)) folds into the tr-type G domain. GTP contacts are provided by residues 14-19 (DHGKST) and 131-134 (NKID).

Belongs to the TRAFAC class translation factor GTPase superfamily. Classic translation factor GTPase family. LepA subfamily.

It is found in the cell inner membrane. The enzyme catalyses GTP + H2O = GDP + phosphate + H(+). Required for accurate and efficient protein synthesis under certain stress conditions. May act as a fidelity factor of the translation reaction, by catalyzing a one-codon backward translocation of tRNAs on improperly translocated ribosomes. Back-translocation proceeds from a post-translocation (POST) complex to a pre-translocation (PRE) complex, thus giving elongation factor G a second chance to translocate the tRNAs correctly. Binds to ribosomes in a GTP-dependent manner. The sequence is that of Elongation factor 4 from Actinobacillus succinogenes (strain ATCC 55618 / DSM 22257 / CCUG 43843 / 130Z).